A 378-amino-acid polypeptide reads, in one-letter code: Fetuin-B (378 aa).

A signal peptide spans 1 to 18 (MGVLRLLVLCTLAACCVA). Cystatin fetuin-B-type domains are found at residues 28 to 141 (NAPF…YNCT) and 152 to 261 (SMCP…VSCE). Residue asparagine 40 is glycosylated (N-linked (GlcNAc...) asparagine). 5 disulfide bridges follow: cysteine 96–cysteine 107, cysteine 120–cysteine 140, cysteine 154–cysteine 157, cysteine 217–cysteine 224, and cysteine 237–cysteine 260. A glycan (N-linked (GlcNAc...) asparagine) is linked at asparagine 139. 2 disordered regions span residues 266–338 (QDQV…PQGD) and 357–378 (LPFP…QRTP). The segment covering 286–297 (QKNTAPTSSPSI) has biased composition (polar residues). Threonine 289 and threonine 292 each carry an O-linked (GalNAc...) threonine glycan. A Phosphoserine modification is found at serine 316. Positions 362 to 378 (KEQRSPECPGPEKQRTP) are enriched in basic and acidic residues.

Belongs to the fetuin family. As to expression, liver.

It localises to the secreted. In terms of biological role, protease inhibitor required for egg fertilization. Required to prevent premature zona pellucida hardening before fertilization, probably by inhibiting the protease activity of ASTL, a protease that mediates the cleavage of ZP2 and triggers zona pellucida hardening. In Rattus norvegicus (Rat), this protein is Fetuin-B (Fetub).